Consider the following 331-residue polypeptide: Probable protein phosphatase 2C 1 (331 aa).

The tract at residues 1-29 (MAASSTATRLSPPRLHAPTTPSPHLPLRR) is disordered. Residues 48–292 (THLIPHPRKA…DDITVIVAQV (245 aa)) enclose the PPM-type phosphatase domain. Residues D79, G80, D210, and D283 each coordinate Mn(2+). The segment at 300–331 (DEGVDEEKGQGDEQGSAVAVASSEQKEDSITT) is disordered.

Belongs to the PP2C family. The cofactor is Mg(2+). Requires Mn(2+) as cofactor.

The enzyme catalyses O-phospho-L-seryl-[protein] + H2O = L-seryl-[protein] + phosphate. It catalyses the reaction O-phospho-L-threonyl-[protein] + H2O = L-threonyl-[protein] + phosphate. This is Probable protein phosphatase 2C 1 from Oryza sativa subsp. japonica (Rice).